A 214-amino-acid chain; its full sequence is Adenylate kinase (214 aa).

Gly10–Thr15 is a binding site for ATP. The tract at residues Ser30–Val59 is NMP. AMP is bound by residues Thr31, Arg36, Gln57–Val59, Gly85–Arg88, and Gln92. The tract at residues Gly122–Asp159 is LID. ATP contacts are provided by residues Arg123 and Thr132 to Tyr133. The AMP site is built by Arg156 and Arg167. Residue Lys200 participates in ATP binding.

It belongs to the adenylate kinase family. Monomer.

It localises to the cytoplasm. It catalyses the reaction AMP + ATP = 2 ADP. It functions in the pathway purine metabolism; AMP biosynthesis via salvage pathway; AMP from ADP: step 1/1. Its function is as follows. Catalyzes the reversible transfer of the terminal phosphate group between ATP and AMP. Plays an important role in cellular energy homeostasis and in adenine nucleotide metabolism. The protein is Adenylate kinase of Photobacterium profundum (strain SS9).